Here is a 214-residue protein sequence, read N- to C-terminus: Phosphatidylserine decarboxylase proenzyme (214 aa).

Ser-182 functions as the Schiff-base intermediate with substrate; via pyruvic acid in the catalytic mechanism. Ser-182 carries the pyruvic acid (Ser); by autocatalysis modification.

This sequence belongs to the phosphatidylserine decarboxylase family. PSD-A subfamily. As to quaternary structure, heterodimer of a large membrane-associated beta subunit and a small pyruvoyl-containing alpha subunit. It depends on pyruvate as a cofactor. In terms of processing, is synthesized initially as an inactive proenzyme. Formation of the active enzyme involves a self-maturation process in which the active site pyruvoyl group is generated from an internal serine residue via an autocatalytic post-translational modification. Two non-identical subunits are generated from the proenzyme in this reaction, and the pyruvate is formed at the N-terminus of the alpha chain, which is derived from the carboxyl end of the proenzyme. The post-translation cleavage follows an unusual pathway, termed non-hydrolytic serinolysis, in which the side chain hydroxyl group of the serine supplies its oxygen atom to form the C-terminus of the beta chain, while the remainder of the serine residue undergoes an oxidative deamination to produce ammonia and the pyruvoyl prosthetic group on the alpha chain.

It localises to the cell membrane. It catalyses the reaction a 1,2-diacyl-sn-glycero-3-phospho-L-serine + H(+) = a 1,2-diacyl-sn-glycero-3-phosphoethanolamine + CO2. It functions in the pathway phospholipid metabolism; phosphatidylethanolamine biosynthesis; phosphatidylethanolamine from CDP-diacylglycerol: step 2/2. Its function is as follows. Catalyzes the formation of phosphatidylethanolamine (PtdEtn) from phosphatidylserine (PtdSer). The polypeptide is Phosphatidylserine decarboxylase proenzyme (Burkholderia multivorans (strain ATCC 17616 / 249)).